A 456-amino-acid polypeptide reads, in one-letter code: ATP synthase subunit beta 1 (456 aa).

Residue 152–159 (GGAGVGKS) participates in ATP binding.

This sequence belongs to the ATPase alpha/beta chains family. F-type ATPases have 2 components, CF(1) - the catalytic core - and CF(0) - the membrane proton channel. CF(1) has five subunits: alpha(3), beta(3), gamma(1), delta(1), epsilon(1). CF(0) has three main subunits: a(1), b(2) and c(9-12). The alpha and beta chains form an alternating ring which encloses part of the gamma chain. CF(1) is attached to CF(0) by a central stalk formed by the gamma and epsilon chains, while a peripheral stalk is formed by the delta and b chains.

It localises to the cell membrane. It carries out the reaction ATP + H2O + 4 H(+)(in) = ADP + phosphate + 5 H(+)(out). Its function is as follows. Produces ATP from ADP in the presence of a proton gradient across the membrane. The catalytic sites are hosted primarily by the beta subunits. The polypeptide is ATP synthase subunit beta 1 (Listeria monocytogenes serovar 1/2a (strain ATCC BAA-679 / EGD-e)).